The sequence spans 363 residues: MKPFPRAEISRKALQANLARIRELAPQSKIMAVVKANGYGHGLLNVANSVATYDQGADGFGLARLEEALELRSGGVNARLLLLEGFFRVTDLPLLVQHHIDTVVHHESQVEMLEQAELTTPVTVWMKIDTGMHRLGFSLAQFDAIYQRLLACHNIAKPIHLMTHFACSDEPDNSFTQAQIDAFESVTASLDGDRSLANSGGMLFWPQSQRDWIRAGIALYGVSPMVGDKGGNHGLVPAMELKSQLISVKDHQAGDSVGYGAFWRARKDTRIGVVAIGYGDGYPRHAPEGTPVWLNGRRVPIVGRVSMDMLTVDLGLDSQDKVGDEVLLWGSALAVEEVADHIGTIAYELVTKLTPRVAVALLP.

K35 acts as the Proton acceptor; specific for D-alanine in catalysis. K35 bears the N6-(pyridoxal phosphate)lysine mark. R134 is a binding site for substrate. The active-site Proton acceptor; specific for L-alanine is Y259. A substrate-binding site is contributed by M307.

This sequence belongs to the alanine racemase family. Requires pyridoxal 5'-phosphate as cofactor.

The enzyme catalyses L-alanine = D-alanine. Its pathway is amino-acid biosynthesis; D-alanine biosynthesis; D-alanine from L-alanine: step 1/1. In terms of biological role, catalyzes the interconversion of L-alanine and D-alanine. May also act on other amino acids. In Shewanella denitrificans (strain OS217 / ATCC BAA-1090 / DSM 15013), this protein is Alanine racemase (alr).